The following is a 1343-amino-acid chain: DNA-directed RNA polymerase subunit beta (1343 aa).

Belongs to the RNA polymerase beta chain family. In terms of assembly, the RNAP catalytic core consists of 2 alpha, 1 beta, 1 beta' and 1 omega subunit. When a sigma factor is associated with the core the holoenzyme is formed, which can initiate transcription.

It catalyses the reaction RNA(n) + a ribonucleoside 5'-triphosphate = RNA(n+1) + diphosphate. Functionally, DNA-dependent RNA polymerase catalyzes the transcription of DNA into RNA using the four ribonucleoside triphosphates as substrates. The sequence is that of DNA-directed RNA polymerase subunit beta from Shewanella sediminis (strain HAW-EB3).